A 369-amino-acid polypeptide reads, in one-letter code: MAVDQESFVHLSRPLAPNVLGFGVSNAPLTVNIQPQAVFSIIDHAVRRDDRDTQSTRVIGALVGVRSEDGSEVEVRSTFAIPHTENEDQVEVDVEYQKNMLALTLKANPRETLLGWYTTSHELNSFSALIQNFFASPETGTFPHPAVHLTIGTEAGATIDTKTYISAPVAVSPERAAESCLFIEVPHKLLFTDAERGALGSVAAAADAESRSAPVVSDIENLAQALETVSDLLERVSGFVGEVLDEERDGNHALGQYLMNALSLAPKVSNLAIENDFNNHIQDVLMVSYLANTIRTQIELSQRLATAKLDEGKEGGEKKDGEGAEGDKKTDGQRGQRGQGGKRGGRSGGAGGRGGREQREPREPREAAE.

The MPN domain maps to 31–170 (VNIQPQAVFS…TKTYISAPVA (140 aa)). Over residues 309-334 (LDEGKEGGEKKDGEGAEGDKKTDGQR) the composition is skewed to basic and acidic residues. A disordered region spans residues 309-369 (LDEGKEGGEK…EPREPREAAE (61 aa)). The segment covering 335-353 (GQRGQGGKRGGRSGGAGGR) has biased composition (gly residues). Basic and acidic residues predominate over residues 354–369 (GGREQREPREPREAAE).

It belongs to the eIF-3 subunit F family. In terms of assembly, component of the eukaryotic translation initiation factor 3 (eIF-3) complex.

Its subcellular location is the cytoplasm. Its function is as follows. Component of the eukaryotic translation initiation factor 3 (eIF-3) complex, which is involved in protein synthesis of a specialized repertoire of mRNAs and, together with other initiation factors, stimulates binding of mRNA and methionyl-tRNAi to the 40S ribosome. The eIF-3 complex specifically targets and initiates translation of a subset of mRNAs involved in cell proliferation. The sequence is that of Eukaryotic translation initiation factor 3 subunit F from Neurospora crassa (strain ATCC 24698 / 74-OR23-1A / CBS 708.71 / DSM 1257 / FGSC 987).